Reading from the N-terminus, the 508-residue chain is Bifunctional purine biosynthesis protein PurH (508 aa).

The MGS-like domain maps to 1–145; sequence MAKKALISVS…KNYKYVTILV (145 aa).

This sequence belongs to the PurH family.

It catalyses the reaction (6R)-10-formyltetrahydrofolate + 5-amino-1-(5-phospho-beta-D-ribosyl)imidazole-4-carboxamide = 5-formamido-1-(5-phospho-D-ribosyl)imidazole-4-carboxamide + (6S)-5,6,7,8-tetrahydrofolate. The catalysed reaction is IMP + H2O = 5-formamido-1-(5-phospho-D-ribosyl)imidazole-4-carboxamide. It functions in the pathway purine metabolism; IMP biosynthesis via de novo pathway; 5-formamido-1-(5-phospho-D-ribosyl)imidazole-4-carboxamide from 5-amino-1-(5-phospho-D-ribosyl)imidazole-4-carboxamide (10-formyl THF route): step 1/1. Its pathway is purine metabolism; IMP biosynthesis via de novo pathway; IMP from 5-formamido-1-(5-phospho-D-ribosyl)imidazole-4-carboxamide: step 1/1. This is Bifunctional purine biosynthesis protein PurH from Thermoanaerobacter sp. (strain X514).